The sequence spans 374 residues: tRNA-specific 2-thiouridylase MnmA (374 aa).

Residues glycine 13–serine 20 and methionine 39 contribute to the ATP site. The interval asparagine 99 to aspartate 101 is interaction with target base in tRNA. Cysteine 104 (nucleophile) is an active-site residue. A disulfide bond links cysteine 104 and cysteine 201. Position 128 (glycine 128) interacts with ATP. Positions lysine 151–glutamine 153 are interaction with tRNA. Cysteine 201 functions as the Cysteine persulfide intermediate in the catalytic mechanism. The tract at residues arginine 313–tyrosine 314 is interaction with tRNA.

The protein belongs to the MnmA/TRMU family.

Its subcellular location is the cytoplasm. It carries out the reaction S-sulfanyl-L-cysteinyl-[protein] + uridine(34) in tRNA + AH2 + ATP = 2-thiouridine(34) in tRNA + L-cysteinyl-[protein] + A + AMP + diphosphate + H(+). Its function is as follows. Catalyzes the 2-thiolation of uridine at the wobble position (U34) of tRNA, leading to the formation of s(2)U34. The polypeptide is tRNA-specific 2-thiouridylase MnmA (Streptococcus equi subsp. zooepidemicus (strain MGCS10565)).